Here is a 314-residue protein sequence, read N- to C-terminus: Lipoyl synthase (314 aa).

7 residues coordinate [4Fe-4S] cluster: cysteine 67, cysteine 72, cysteine 78, cysteine 93, cysteine 97, cysteine 100, and serine 306. Positions 79–295 constitute a Radical SAM core domain; the sequence is FNRGTATFMI…KNYALSIGFK (217 aa).

It belongs to the radical SAM superfamily. Lipoyl synthase family. Requires [4Fe-4S] cluster as cofactor.

It is found in the cytoplasm. It carries out the reaction [[Fe-S] cluster scaffold protein carrying a second [4Fe-4S](2+) cluster] + N(6)-octanoyl-L-lysyl-[protein] + 2 oxidized [2Fe-2S]-[ferredoxin] + 2 S-adenosyl-L-methionine + 4 H(+) = [[Fe-S] cluster scaffold protein] + N(6)-[(R)-dihydrolipoyl]-L-lysyl-[protein] + 4 Fe(3+) + 2 hydrogen sulfide + 2 5'-deoxyadenosine + 2 L-methionine + 2 reduced [2Fe-2S]-[ferredoxin]. Its pathway is protein modification; protein lipoylation via endogenous pathway; protein N(6)-(lipoyl)lysine from octanoyl-[acyl-carrier-protein]: step 2/2. Catalyzes the radical-mediated insertion of two sulfur atoms into the C-6 and C-8 positions of the octanoyl moiety bound to the lipoyl domains of lipoate-dependent enzymes, thereby converting the octanoylated domains into lipoylated derivatives. This chain is Lipoyl synthase, found in Buchnera aphidicola subsp. Baizongia pistaciae (strain Bp).